Here is a 380-residue protein sequence, read N- to C-terminus: MTTPIRFELIKTCRQTGARLGILHTPHGSFETPMFMPVGTLATVKTLSPEELKEMGAGVILSNTYHLWLRPGHDIVEEAGGLHAFMNWDRGILTDSGGFQVFSLSEFRRIEEEGVYFRNHLNGDKLFLSPEKAVEIQNALGADIIMAFDECPPYPATYEYMKQSIERTSRWAERCLKAHRRPNEQGLFGIVQGGEYEELRRQSARDLVSLDFPGYAVGGLSVGEPKEVMNRVLEFTTPLLPADKPRYLMGVGSPDSLIDGAIRGIDMFDCVLPTRIGRNGTVMTSEGRVVIKNAQYARDFSPLDPNCDCYTCRNYTRAYIRHLIKCDETFGIRLTSYHNVYFLIKLMEQVRQAIREDRLADFREEFFECYGFNKPNAKNF.

Asp95 acts as the Proton acceptor in catalysis. Substrate is bound by residues 95–99, Asp149, Gln192, and Gly219; that span reads DSGGF. The tract at residues 250–256 is RNA binding; that stretch reads GVGSPDS. The active-site Nucleophile is the Asp269. Residues 274-278 are RNA binding; important for wobble base 34 recognition; that stretch reads TRIGR. Cys307, Cys309, Cys312, and His338 together coordinate Zn(2+).

It belongs to the queuine tRNA-ribosyltransferase family. As to quaternary structure, homodimer. Within each dimer, one monomer is responsible for RNA recognition and catalysis, while the other monomer binds to the replacement base PreQ1. Zn(2+) is required as a cofactor.

It carries out the reaction 7-aminomethyl-7-carbaguanine + guanosine(34) in tRNA = 7-aminomethyl-7-carbaguanosine(34) in tRNA + guanine. It functions in the pathway tRNA modification; tRNA-queuosine biosynthesis. Its function is as follows. Catalyzes the base-exchange of a guanine (G) residue with the queuine precursor 7-aminomethyl-7-deazaguanine (PreQ1) at position 34 (anticodon wobble position) in tRNAs with GU(N) anticodons (tRNA-Asp, -Asn, -His and -Tyr). Catalysis occurs through a double-displacement mechanism. The nucleophile active site attacks the C1' of nucleotide 34 to detach the guanine base from the RNA, forming a covalent enzyme-RNA intermediate. The proton acceptor active site deprotonates the incoming PreQ1, allowing a nucleophilic attack on the C1' of the ribose to form the product. After dissociation, two additional enzymatic reactions on the tRNA convert PreQ1 to queuine (Q), resulting in the hypermodified nucleoside queuosine (7-(((4,5-cis-dihydroxy-2-cyclopenten-1-yl)amino)methyl)-7-deazaguanosine). The polypeptide is Queuine tRNA-ribosyltransferase (Geobacillus kaustophilus (strain HTA426)).